The sequence spans 431 residues: Trigger factor (431 aa).

The region spanning 158-243 (GYLVALETWS…VIEVSEPVLL (86 aa)) is the PPIase FKBP-type domain.

This sequence belongs to the FKBP-type PPIase family. Tig subfamily.

The protein resides in the cytoplasm. The enzyme catalyses [protein]-peptidylproline (omega=180) = [protein]-peptidylproline (omega=0). Involved in protein export. Acts as a chaperone by maintaining the newly synthesized protein in an open conformation. Functions as a peptidyl-prolyl cis-trans isomerase. The protein is Trigger factor of Xylella fastidiosa (strain M23).